We begin with the raw amino-acid sequence, 163 residues long: uncharacterized protein (163 aa).

Residues 144–163 (WSHSQSQLGTPGRGKGALGF) form a disordered region. Residues 154 to 163 (PGRGKGALGF) are compositionally biased toward gly residues.

This is an uncharacterized protein from Homo sapiens (Human).